The following is a 273-amino-acid chain: Dermonecrotic toxin LsaSicTox-alphaIB1ai (273 aa).

His5 is an active-site residue. Residues Glu25 and Asp27 each coordinate Mg(2+). Catalysis depends on His41, which acts as the Nucleophile. 2 disulfides stabilise this stretch: Cys45/Cys51 and Cys47/Cys190. Position 85 (Asp85) interacts with Mg(2+).

It belongs to the arthropod phospholipase D family. Class II subfamily. The cofactor is Mg(2+). In terms of tissue distribution, expressed by the venom gland.

The protein resides in the secreted. The enzyme catalyses an N-(acyl)-sphingosylphosphocholine = an N-(acyl)-sphingosyl-1,3-cyclic phosphate + choline. It carries out the reaction an N-(acyl)-sphingosylphosphoethanolamine = an N-(acyl)-sphingosyl-1,3-cyclic phosphate + ethanolamine. The catalysed reaction is a 1-acyl-sn-glycero-3-phosphocholine = a 1-acyl-sn-glycero-2,3-cyclic phosphate + choline. It catalyses the reaction a 1-acyl-sn-glycero-3-phosphoethanolamine = a 1-acyl-sn-glycero-2,3-cyclic phosphate + ethanolamine. Functionally, dermonecrotic toxins cleave the phosphodiester linkage between the phosphate and headgroup of certain phospholipids (sphingolipid and lysolipid substrates), forming an alcohol (often choline) and a cyclic phosphate. This toxin acts on sphingomyelin (SM). It may also act on ceramide phosphoethanolamine (CPE), lysophosphatidylcholine (LPC) and lysophosphatidylethanolamine (LPE), but not on lysophosphatidylserine (LPS), and lysophosphatidylglycerol (LPG). It acts by transphosphatidylation, releasing exclusively cyclic phosphate products as second products. Induces dermonecrosis, hemolysis, increased vascular permeability, edema, inflammatory response, and platelet aggregation. The sequence is that of Dermonecrotic toxin LsaSicTox-alphaIB1ai from Loxosceles sabina (Tucson recluse spider).